Reading from the N-terminus, the 342-residue chain is N-acetyl-gamma-glutamyl-phosphate reductase (342 aa).

Cysteine 147 is a catalytic residue.

It belongs to the NAGSA dehydrogenase family. Type 1 subfamily.

The protein resides in the cytoplasm. The enzyme catalyses N-acetyl-L-glutamate 5-semialdehyde + phosphate + NADP(+) = N-acetyl-L-glutamyl 5-phosphate + NADPH + H(+). The protein operates within amino-acid biosynthesis; L-arginine biosynthesis; N(2)-acetyl-L-ornithine from L-glutamate: step 3/4. Catalyzes the NADPH-dependent reduction of N-acetyl-5-glutamyl phosphate to yield N-acetyl-L-glutamate 5-semialdehyde. The sequence is that of N-acetyl-gamma-glutamyl-phosphate reductase from Campylobacter jejuni subsp. jejuni serotype O:2 (strain ATCC 700819 / NCTC 11168).